Consider the following 189-residue polypeptide: Cell division protein SepF (189 aa).

The segment at 25-70 is disordered; that stretch reads ESRVQQQAVKPSNSRPAQQEPVRDIKQPRLVSSSSQHVTNTPSSNE. Composition is skewed to polar residues over residues 27–41 and 54–70; these read RVQQ…SRPA and LVSS…SSNE.

It belongs to the SepF family. In terms of assembly, homodimer. Interacts with FtsZ.

The protein resides in the cytoplasm. Functionally, cell division protein that is part of the divisome complex and is recruited early to the Z-ring. Probably stimulates Z-ring formation, perhaps through the cross-linking of FtsZ protofilaments. Its function overlaps with FtsA. This is Cell division protein SepF from Streptococcus gordonii (strain Challis / ATCC 35105 / BCRC 15272 / CH1 / DL1 / V288).